We begin with the raw amino-acid sequence, 203 residues long: Histidine biosynthesis bifunctional protein HisIE (203 aa).

Positions 1-108 (MELDFDKMNG…GEKNEEPVMF (108 aa)) are phosphoribosyl-AMP cyclohydrolase. The tract at residues 109 to 203 (LKALQDFIDK…ERHSSTWKKH (95 aa)) is phosphoribosyl-ATP pyrophosphohydrolase.

This sequence in the N-terminal section; belongs to the PRA-CH family. It in the C-terminal section; belongs to the PRA-PH family.

The protein localises to the cytoplasm. The catalysed reaction is 1-(5-phospho-beta-D-ribosyl)-ATP + H2O = 1-(5-phospho-beta-D-ribosyl)-5'-AMP + diphosphate + H(+). The enzyme catalyses 1-(5-phospho-beta-D-ribosyl)-5'-AMP + H2O = 1-(5-phospho-beta-D-ribosyl)-5-[(5-phospho-beta-D-ribosylamino)methylideneamino]imidazole-4-carboxamide. It functions in the pathway amino-acid biosynthesis; L-histidine biosynthesis; L-histidine from 5-phospho-alpha-D-ribose 1-diphosphate: step 2/9. It participates in amino-acid biosynthesis; L-histidine biosynthesis; L-histidine from 5-phospho-alpha-D-ribose 1-diphosphate: step 3/9. This is Histidine biosynthesis bifunctional protein HisIE from Bacteroides thetaiotaomicron (strain ATCC 29148 / DSM 2079 / JCM 5827 / CCUG 10774 / NCTC 10582 / VPI-5482 / E50).